A 462-amino-acid chain; its full sequence is MTLAVIGLFTLFTSIIAITPAREFVSLAEREDALLRELFQGYQRWVRPVQHANHSVKVRFGLKISQLVDVDEKNQLMTTNVWLWQEWLDYKLRWNPENYGGITSIRVPSESIWLPDIVLYENADGRFEGSLMTKAIVRYNGMITWTPPASYKSACTMDVTFFPFDRQNCSMKFGSWTYDGNMVKLVLINQQVDRSDFFDNGEWEILSATGVKGSRQDSHLSYPYITYSFILKRLPLFYTLFLIIPCLGLSFLTVLVFYLPSDEGEKVSLSTSVLVSLTVFLLVIEEIIPSSSKVIPLIGEYLLFIMIFVTLSIIVTIFVINVHHRSSATYHPMSPWVRSLFLQRLPHLLCMRGNTDRYHYPELEPHSPDLKPRNKKGPPGPEGEGQALINLLEQATNSVRYISRHIKKEHFIREVVQDWKFVAQVLDRIFLWTFLTVSVLGTILIFTPALKMFLRTPPPPSP.

Residues 1 to 30 (MTLAVIGLFTLFTSIIAITPAREFVSLAER) form the signal peptide. Over 31-234 (EDALLRELFQ…ITYSFILKRL (204 aa)) the chain is Extracellular. Residues N53 and N168 are each glycosylated (N-linked (GlcNAc...) asparagine). C155 and C169 are disulfide-bonded. 3 helical membrane passes run 235 to 259 (PLFY…VFYL), 267 to 284 (VSLS…LLVI), and 301 to 322 (YLLF…VINV). The Cytoplasmic portion of the chain corresponds to 323 to 428 (HHRSSATYHP…WKFVAQVLDR (106 aa)). The segment covering 362 to 372 (ELEPHSPDLKP) has biased composition (basic and acidic residues). The disordered stretch occupies residues 362-384 (ELEPHSPDLKPRNKKGPPGPEGE). Residues 429–446 (IFLWTFLTVSVLGTILIF) traverse the membrane as a helical segment.

This sequence belongs to the ligand-gated ion channel (TC 1.A.9) family. Acetylcholine receptor (TC 1.A.9.1) subfamily. Neuronal AChR seems to be composed of two different type of subunits: alpha and beta.

It is found in the postsynaptic cell membrane. The protein resides in the cell membrane. Functionally, after binding acetylcholine, the AChR responds by an extensive change in conformation that affects all subunits and leads to opening of an ion-conducting channel across the plasma membrane. This Carassius auratus (Goldfish) protein is Neuronal acetylcholine receptor subunit non-alpha-2.